The chain runs to 751 residues: Catalase-peroxidase (751 aa).

Residues 1-12 (MSNETKCPFSHA) form the signal peptide. Positions 91-241 (WHSAGTYRIG…LAAVQMGLIY (151 aa)) form a cross-link, tryptophyl-tyrosyl-methioninium (Trp-Tyr) (with M-267). Residue histidine 92 is the Proton acceptor of the active site. Residues 241–267 (YVNPEGPDGNPDPLAAAHDIRESFGRM) constitute a cross-link (tryptophyl-tyrosyl-methioninium (Tyr-Met) (with W-91)). Residue histidine 282 participates in heme b binding.

Belongs to the peroxidase family. Peroxidase/catalase subfamily. As to quaternary structure, homodimer or homotetramer. It depends on heme b as a cofactor. Post-translationally, formation of the three residue Trp-Tyr-Met cross-link is important for the catalase, but not the peroxidase activity of the enzyme.

It carries out the reaction H2O2 + AH2 = A + 2 H2O. The catalysed reaction is 2 H2O2 = O2 + 2 H2O. In terms of biological role, bifunctional enzyme with both catalase and broad-spectrum peroxidase activity. This is Catalase-peroxidase from Cupriavidus necator (strain ATCC 17699 / DSM 428 / KCTC 22496 / NCIMB 10442 / H16 / Stanier 337) (Ralstonia eutropha).